Here is a 726-residue protein sequence, read N- to C-terminus: Fatty acid oxidation complex subunit alpha (726 aa).

The segment at 1-189 (MIYQGENLSV…KIGMVDGIVS (189 aa)) is enoyl-CoA hydratase/isomerase. D296 is a binding site for substrate. The tract at residues 311 to 726 (EPVKNAAVLG…PKSSVSSPSV (416 aa)) is 3-hydroxyacyl-CoA dehydrogenase. Residues M324, D343, 400–402 (VVE), K407, and S429 contribute to the NAD(+) site. H450 functions as the For 3-hydroxyacyl-CoA dehydrogenase activity in the catalytic mechanism. N453 lines the NAD(+) pocket. 2 residues coordinate substrate: N500 and Y660.

It in the N-terminal section; belongs to the enoyl-CoA hydratase/isomerase family. The protein in the C-terminal section; belongs to the 3-hydroxyacyl-CoA dehydrogenase family. As to quaternary structure, heterotetramer of two alpha chains (FadB) and two beta chains (FadA).

It carries out the reaction a (3S)-3-hydroxyacyl-CoA + NAD(+) = a 3-oxoacyl-CoA + NADH + H(+). The enzyme catalyses a (3S)-3-hydroxyacyl-CoA = a (2E)-enoyl-CoA + H2O. It catalyses the reaction a 4-saturated-(3S)-3-hydroxyacyl-CoA = a (3E)-enoyl-CoA + H2O. The catalysed reaction is (3S)-3-hydroxybutanoyl-CoA = (3R)-3-hydroxybutanoyl-CoA. It carries out the reaction a (3Z)-enoyl-CoA = a 4-saturated (2E)-enoyl-CoA. The enzyme catalyses a (3E)-enoyl-CoA = a 4-saturated (2E)-enoyl-CoA. Its pathway is lipid metabolism; fatty acid beta-oxidation. In terms of biological role, involved in the aerobic and anaerobic degradation of long-chain fatty acids via beta-oxidation cycle. Catalyzes the formation of 3-oxoacyl-CoA from enoyl-CoA via L-3-hydroxyacyl-CoA. It can also use D-3-hydroxyacyl-CoA and cis-3-enoyl-CoA as substrate. The sequence is that of Fatty acid oxidation complex subunit alpha from Aliivibrio salmonicida (strain LFI1238) (Vibrio salmonicida (strain LFI1238)).